The following is a 52-amino-acid chain: Phospholamban (52 aa).

Residue M1 is modified to N-acetylmethionine. At 1-31 the chain is on the cytoplasmic side; sequence MEKVQYLTRSAIRRASTIEMPQQARQKLQNL. S16 is modified (phosphoserine; by PKA and DMPK). The interval 16–22 is involved in HAX1 binding; the sequence is STIEMPQ. The residue at position 17 (T17) is a Phosphothreonine; by CaMK2. The helical transmembrane segment at 32–52 threads the bilayer; that stretch reads FINFCLILICLLLICIIVMLL. Residue C36 is the site of S-palmitoyl cysteine attachment.

This sequence belongs to the phospholamban family. As to quaternary structure, homopentamer. Can also form heterooligomers with other sarcoplasmic/endoplasmic reticulum calcium ATPase (SERCA) regulators ARLN, ERLN, SLN and STRIT1/DWORF. Monomer. Interacts with HAX1. Interacts as a monomer with ATP2A2; the interaction decreases ATP2A2 Ca(2+) affinity. Interacts with VMP1; VMP1 competes with PLN and SLN to prevent them from forming an inhibitory complex with ATP2A2. Interacts with S100A1 in a Ca(2+)-dependent manner. Phosphorylation by PKA abolishes the inhibition of ATP2A2-mediated calcium uptake. Phosphorylated at Thr-17 by CaMK2, and in response to beta-adrenergic stimulation. Phosphorylation by DMPK may stimulate sarcoplasmic reticulum calcium uptake in cardiomyocytes. Post-translationally, palmitoylated by ZDHHC16, promoting formation of the homopentamer. In terms of processing, in elongated spermatids, proteolytically cleaved by SPPL2C which modulates intracellular Ca(2+) homeostasis. As to expression, heart muscle (at protein level).

Its subcellular location is the endoplasmic reticulum membrane. The protein localises to the sarcoplasmic reticulum membrane. It localises to the mitochondrion membrane. It is found in the membrane. In terms of biological role, reversibly inhibits the activity of ATP2A2/SERCA2 in cardiac sarcoplasmic reticulum by decreasing the apparent affinity of the ATPase for Ca(2+). Binds preferentially to the ATP-bound E1 conformational form of ATP2A2 which predominates at low Ca(2+) concentrations during the diastolic phase of the cardiac cycle. Inhibits ATP2A2 Ca(2+) affinity by disrupting its allosteric activation by ATP. Modulates the contractility of the heart muscle in response to physiological stimuli via its effects on ATP2A2. Modulates calcium re-uptake during muscle relaxation and plays an important role in calcium homeostasis in the heart muscle. The degree of ATP2A2 inhibition depends on the oligomeric state of PLN. ATP2A2 inhibition is alleviated by PLN phosphorylation. Also inhibits the activity of ATP2A3/SERCA3. Controls intracellular Ca(2+) levels in elongated spermatids and may play a role in germ cell differentiation. In the thalamic reticular nucleus of the brain, plays a role in the regulation of sleep patterns and executive functioning. This chain is Phospholamban, found in Homo sapiens (Human).